We begin with the raw amino-acid sequence, 689 residues long: Glycine--tRNA ligase beta subunit (689 aa).

This sequence belongs to the class-II aminoacyl-tRNA synthetase family. Tetramer of two alpha and two beta subunits.

The protein resides in the cytoplasm. It carries out the reaction tRNA(Gly) + glycine + ATP = glycyl-tRNA(Gly) + AMP + diphosphate. This chain is Glycine--tRNA ligase beta subunit, found in Coxiella burnetii (strain Dugway 5J108-111).